The following is a 485-amino-acid chain: 4-alpha-glucanotransferase (485 aa).

Belongs to the disproportionating enzyme family.

It localises to the cytoplasm. It catalyses the reaction Transfers a segment of a (1-&gt;4)-alpha-D-glucan to a new position in an acceptor, which may be glucose or a (1-&gt;4)-alpha-D-glucan.. The polypeptide is 4-alpha-glucanotransferase (malQ) (Aquifex aeolicus (strain VF5)).